The primary structure comprises 135 residues: Ribonuclease P protein component 2 (135 aa).

This sequence belongs to the eukaryotic/archaeal RNase P protein component 2 family. As to quaternary structure, consists of a catalytic RNA component and at least 4-5 protein subunits.

It is found in the cytoplasm. It catalyses the reaction Endonucleolytic cleavage of RNA, removing 5'-extranucleotides from tRNA precursor.. Functionally, part of ribonuclease P, a protein complex that generates mature tRNA molecules by cleaving their 5'-ends. The protein is Ribonuclease P protein component 2 of Methanococcus aeolicus (strain ATCC BAA-1280 / DSM 17508 / OCM 812 / Nankai-3).